We begin with the raw amino-acid sequence, 215 residues long: Ribosomal RNA small subunit methyltransferase G (215 aa).

Residues Gly78, Leu83, 128-129 (AE), and Arg146 each bind S-adenosyl-L-methionine.

This sequence belongs to the methyltransferase superfamily. RNA methyltransferase RsmG family.

The protein localises to the cytoplasm. It carries out the reaction guanosine(527) in 16S rRNA + S-adenosyl-L-methionine = N(7)-methylguanosine(527) in 16S rRNA + S-adenosyl-L-homocysteine. Specifically methylates the N7 position of guanine in position 527 of 16S rRNA. The chain is Ribosomal RNA small subunit methyltransferase G from Anaeromyxobacter sp. (strain Fw109-5).